We begin with the raw amino-acid sequence, 201 residues long: 3-isopropylmalate dehydratase small subunit 1 (201 aa).

The protein belongs to the LeuD family. LeuD type 1 subfamily. As to quaternary structure, heterodimer of LeuC and LeuD.

The enzyme catalyses (2R,3S)-3-isopropylmalate = (2S)-2-isopropylmalate. It participates in amino-acid biosynthesis; L-leucine biosynthesis; L-leucine from 3-methyl-2-oxobutanoate: step 2/4. Functionally, catalyzes the isomerization between 2-isopropylmalate and 3-isopropylmalate, via the formation of 2-isopropylmaleate. The chain is 3-isopropylmalate dehydratase small subunit 1 from Salmonella typhimurium (strain LT2 / SGSC1412 / ATCC 700720).